We begin with the raw amino-acid sequence, 425 residues long: Serine--tRNA ligase (425 aa).

230–232 is an L-serine binding site; it reads TAE. Residue 261–263 coordinates ATP; sequence RSE. L-serine is bound at residue E284. Residue 348–351 participates in ATP binding; that stretch reads EISS. S384 provides a ligand contact to L-serine.

Belongs to the class-II aminoacyl-tRNA synthetase family. Type-1 seryl-tRNA synthetase subfamily. As to quaternary structure, homodimer. The tRNA molecule binds across the dimer.

Its subcellular location is the cytoplasm. The catalysed reaction is tRNA(Ser) + L-serine + ATP = L-seryl-tRNA(Ser) + AMP + diphosphate + H(+). The enzyme catalyses tRNA(Sec) + L-serine + ATP = L-seryl-tRNA(Sec) + AMP + diphosphate + H(+). Its pathway is aminoacyl-tRNA biosynthesis; selenocysteinyl-tRNA(Sec) biosynthesis; L-seryl-tRNA(Sec) from L-serine and tRNA(Sec): step 1/1. Functionally, catalyzes the attachment of serine to tRNA(Ser). Is also able to aminoacylate tRNA(Sec) with serine, to form the misacylated tRNA L-seryl-tRNA(Sec), which will be further converted into selenocysteinyl-tRNA(Sec). The protein is Serine--tRNA ligase of Streptococcus pyogenes serotype M3 (strain SSI-1).